A 407-amino-acid polypeptide reads, in one-letter code: Tryptophan synthase beta chain (407 aa).

N6-(pyridoxal phosphate)lysine is present on K91.

This sequence belongs to the TrpB family. Tetramer of two alpha and two beta chains. Requires pyridoxal 5'-phosphate as cofactor.

The catalysed reaction is (1S,2R)-1-C-(indol-3-yl)glycerol 3-phosphate + L-serine = D-glyceraldehyde 3-phosphate + L-tryptophan + H2O. It functions in the pathway amino-acid biosynthesis; L-tryptophan biosynthesis; L-tryptophan from chorismate: step 5/5. Its function is as follows. The beta subunit is responsible for the synthesis of L-tryptophan from indole and L-serine. The polypeptide is Tryptophan synthase beta chain (Streptococcus pneumoniae (strain Taiwan19F-14)).